The chain runs to 325 residues: Quinolinate synthase (325 aa).

Iminosuccinate-binding residues include His41 and Ser58. Position 103 (Cys103) interacts with [4Fe-4S] cluster. Residues 129–131 (YIN) and Ser146 each bind iminosuccinate. Cys189 lines the [4Fe-4S] cluster pocket. Iminosuccinate-binding positions include 215–217 (HPE) and Thr232. [4Fe-4S] cluster is bound at residue Cys282.

The protein belongs to the quinolinate synthase family. Type 2 subfamily. [4Fe-4S] cluster is required as a cofactor.

The protein resides in the cytoplasm. The enzyme catalyses iminosuccinate + dihydroxyacetone phosphate = quinolinate + phosphate + 2 H2O + H(+). It functions in the pathway cofactor biosynthesis; NAD(+) biosynthesis; quinolinate from iminoaspartate: step 1/1. Functionally, catalyzes the condensation of iminoaspartate with dihydroxyacetone phosphate to form quinolinate. In Rippkaea orientalis (strain PCC 8801 / RF-1) (Cyanothece sp. (strain PCC 8801)), this protein is Quinolinate synthase.